We begin with the raw amino-acid sequence, 391 residues long: UPF0229 protein CLH_2838 (391 aa).

2 disordered regions span residues 1–23 and 75–107; these read MAIFRDRTDKQVDHDRAIEDKRR and VATGTGEEKRGDKIESGSKKAMGKGNKGAGNEE. The span at 80–92 shows a compositional bias: basic and acidic residues; that stretch reads GEEKRGDKIESGS.

The protein belongs to the UPF0229 family.

This Clostridium botulinum (strain Alaska E43 / Type E3) protein is UPF0229 protein CLH_2838.